The primary structure comprises 298 residues: Cyanophycinase (298 aa).

Active-site charge relay system residues include Ser-155, Glu-173, and His-197.

It belongs to the peptidase S51 family.

It carries out the reaction [L-4-(L-arginin-2-N-yl)aspartate](n) + H2O = [L-4-(L-arginin-2-N-yl)aspartate](n-1) + L-4-(L-arginin-2-N-yl)aspartate. Functionally, exopeptidase that catalyzes the hydrolytic cleavage of multi-L-arginyl-poly-L-aspartic acid (cyanophycin; a water-insoluble reserve polymer) into aspartate-arginine dipeptides. In Trichormus variabilis (strain ATCC 29413 / PCC 7937) (Anabaena variabilis), this protein is Cyanophycinase (cphB).